The chain runs to 427 residues: uncharacterized protein (427 aa).

The stretch at 135-168 forms a coiled coil; it reads PILKQKLVSLESKVKKIDKEMEKHNDLLKEIQEN.

This is an uncharacterized protein from Arabidopsis thaliana (Mouse-ear cress).